The sequence spans 262 residues: Matrix protein (262 aa).

The disordered stretch occupies residues 219–243 (PSPAEGKIGRIKRPTERKEDTPSMT).

This sequence belongs to the nucleorhabdovirus type-1 matrix protein family. Homomultimer. Interacts with nucleoprotein and with the cytoplasmic domain of glycoprotein.

The protein localises to the virion membrane. The protein resides in the host endomembrane system. Its function is as follows. Plays a major role in assembly and budding of virion. Completely covers the ribonucleoprotein coil and keep it in condensed bullet-shaped form. Inhibits viral transcription and stimulates replication. The protein is Matrix protein (M) of Rice yellow stunt virus (RYSV).